The sequence spans 507 residues: Efflux pump ustT (507 aa).

11 consecutive transmembrane segments (helical) span residues 59–79 (IAVV…IIVA), 146–166 (LLIA…VTWF), 180–200 (IWQL…AMIA), 216–236 (HAAV…LANF), 240–260 (IPVF…YVVV), 316–336 (VLLI…SGIT), 359–379 (AGVN…ILVK), 398–418 (VCLI…TLVF), 421–441 (TVFA…TGMV), 449–469 (VFTG…PMLA), and 481–501 (IWVG…LGAI).

This sequence belongs to the major facilitator superfamily.

The protein localises to the cell membrane. It participates in mycotoxin biosynthesis. In terms of biological role, efflux pump; part of the gene cluster that mediates the biosynthesis of the secondary metabolite ustiloxin B, an antimitotic tetrapeptide. Probably involved in self-resistance through the export of ustiloxin B. This Aspergillus flavus (strain ATCC 200026 / FGSC A1120 / IAM 13836 / NRRL 3357 / JCM 12722 / SRRC 167) protein is Efflux pump ustT.